The chain runs to 208 residues: Uracil phosphoribosyltransferase (208 aa).

5-phospho-alpha-D-ribose 1-diphosphate is bound by residues arginine 78, arginine 103, and 130-138 (DPMLATGGS). Residues isoleucine 193 and 198 to 200 (GDA) each bind uracil. Aspartate 199 serves as a coordination point for 5-phospho-alpha-D-ribose 1-diphosphate.

It belongs to the UPRTase family. It depends on Mg(2+) as a cofactor.

The catalysed reaction is UMP + diphosphate = 5-phospho-alpha-D-ribose 1-diphosphate + uracil. Its pathway is pyrimidine metabolism; UMP biosynthesis via salvage pathway; UMP from uracil: step 1/1. Its activity is regulated as follows. Allosterically activated by GTP. Catalyzes the conversion of uracil and 5-phospho-alpha-D-ribose 1-diphosphate (PRPP) to UMP and diphosphate. The sequence is that of Uracil phosphoribosyltransferase from Enterobacter sp. (strain 638).